A 1325-amino-acid polypeptide reads, in one-letter code: MLPVHTEVKPNPLQDANLCSRVFFWWLNPLFKTGHKRRLEEDDMFSVLPEDRSKHLGEELQRYWDKELLRAKKDSRKPSLTKAIIKCYWKSYLILGIFTLIEEGTRVVQPLFLGKIIEYFEKYDPDDSVALHTAYGYAAVLSMCTLILAILHHLYFYHVQCAGMRLRVAMCHMIYRKALRLSNSAMGKTTTGQIVNLLSNDVNKFDQVTIFLHFLWAGPLQAIAVTVLLWVEIGISCLAGLAVLVILLPLQSCIGKLFSSLRSKTAAFTDARIRTMNEVITGMRIIKMYAWEKSFADLIANLRKKEISKILGSSYLRGMNMASFFIANKVILFVTFTSYVLLGNEITASHVFVAMTLYGAVRLTVTLFFPSAIERGSEAIVSIRRIKNFLLLDELPQRKAHVPSDGKAIVHVQDFTAFWDKALDSPTLQGLSFIARPGELLAVVGPVGAGKSSLLSAVLGELPPASGLVSVHGRIAYVSQQPWVFSGTVRSNILFGKKYEKERYEKVIKACALKKDLQLLEDGDLTVIGDRGATLSGGQKARVNLARAVYQDADIYLLDDPLSAVDAEVGKHLFQLCICQALHEKITILVTHQLQYLKAASHILILKDGEMVQKGTYTEFLKSGVDFGSLLKKENEEAEPSTAPGTPTLRKRTFSEASIWSQQSSRPSLKDGAPEGQDAENTQAVQPEESRSEGRIGFKAYKNYFSAGASWFFIIFLVLLNMVGQVFYVLQDWWLSHWANKQGALNNTRNANGNITETLDLSWYLGIYAGLTAVTVLFGIARSLLVFYILVNASQTLHNRMFESILKAPVLFFDRNPIGRILNRFSKDIGHMDDLLPLTFLDFIQTLLLVVSVIAVAAAVIPWILIPLVPLSVVFLVLRRYFLETSRDVKRLESTTRSPVFSHLSSSLQGLWTIRAYKAEERCQELFDAHQDLHSEAWFLFLTTSRWFAVRLDAICAIFVIVVAFGSLVLAKTLNAGQVGLALSYALTLMGMFQWSVRQSAEVENMMISVERVIEYTDLEKEAPWECKKRPPPGWPHEGVIVFDNVNFTYSLDGPLVLKHLTALIKSREKVGIVGRTGAGKSSLISALFRLSEPEGKIWIDKILTTEIGLHDLRKKMSIIPQEPVLFTGTMRKNLDPFNEHTDEELWRALEEVQLKEAIEDLPGKMDTELAESGSNFSVGQRQLVCLARAILKNNRILIIDEATANVDPRTDELIQQKIREKFAQCTVLTIAHRLNTIIDSDKIMVLDSGRLKEYDEPYVLLQNPESLFYKMVQQLGKGEAAALTETAKQVYFRRNYPDITFTSPAVMNTSNGQPSALTIFETAL.

The next 6 helical transmembrane spans lie at 93–113 (LILGIFTLIEEGTRVVQPLFL), 136–156 (GYAAVLSMCTLILAILHHLYF), 205–225 (FDQVTIFLHFLWAGPLQAIAV), 227–247 (VLLWVEIGISCLAGLAVLVIL), 322–342 (ASFFIANKVILFVTFTSYVLL), and 351–371 (VFVAMTLYGAVRLTVTLFFPS). In terms of domain architecture, ABC transmembrane type-1 1 spans 93–377 (LILGIFTLIE…FFPSAIERGS (285 aa)). The ABC transporter 1 domain maps to 410-633 (VHVQDFTAFW…GVDFGSLLKK (224 aa)). An ATP-binding site is contributed by 445–452 (GPVGAGKS). 2 positions are modified to phosphothreonine: T646 and T648. Positions 657–667 (ASIWSQQSSRP) are enriched in polar residues. Residues 657–690 (ASIWSQQSSRPSLKDGAPEGQDAENTQAVQPEES) are disordered. 2 positions are modified to phosphoserine: S664 and S668. 5 helical membrane passes run 710–730 (SWFFIIFLVLLNMVGQVFYVL), 761–781 (LSWYLGIYAGLTAVTVLFGIA), 849–869 (LVVSVIAVAAAVIPWILIPLV), 954–974 (AICAIFVIVVAFGSLVLAKTL), and 977–997 (GQVGLALSYALTLMGMFQWSV). Positions 714–1005 (IIFLVLLNMV…SVRQSAEVEN (292 aa)) constitute an ABC transmembrane type-1 2 domain. The ABC transporter 2 domain occupies 1041–1274 (IVFDNVNFTY…PESLFYKMVQ (234 aa)). 1075–1082 (GRTGAGKS) contacts ATP. The PDZ-binding signature appears at 1322-1325 (ETAL).

As to quaternary structure, interacts (via PDZ-binding motif) with SNX27 (via PDZ domain); this interaction accelerates MRP4 internalization. Mg(2+) is required as a cofactor. In terms of processing, N-glycosylated; leading to substrate-selective effects on its transport activity.

The protein localises to the basolateral cell membrane. Its subcellular location is the apical cell membrane. It carries out the reaction ATP + H2O + xenobioticSide 1 = ADP + phosphate + xenobioticSide 2.. The catalysed reaction is an S-substituted glutathione(in) + ATP + H2O = an S-substituted glutathione(out) + ADP + phosphate + H(+). The enzyme catalyses 17beta-estradiol 17-O-(beta-D-glucuronate)(in) + ATP + H2O = 17beta-estradiol 17-O-(beta-D-glucuronate)(out) + ADP + phosphate + H(+). It catalyses the reaction dehydroepiandrosterone 3-sulfate(in) + ATP + H2O = dehydroepiandrosterone 3-sulfate(out) + ADP + phosphate + H(+). It carries out the reaction leukotriene C4(in) + ATP + H2O = leukotriene C4(out) + ADP + phosphate + H(+). The catalysed reaction is leukotriene B4(in) + ATP + H2O = leukotriene B4(out) + ADP + phosphate + H(+). The enzyme catalyses urate(in) + ATP + H2O = urate(out) + ADP + phosphate + H(+). It catalyses the reaction 3',5'-cyclic GMP(in) + ATP + H2O = 3',5'-cyclic GMP(out) + ADP + phosphate + H(+). It carries out the reaction 3',5'-cyclic AMP(in) + ATP + H2O = 3',5'-cyclic AMP(out) + ADP + phosphate + H(+). The catalysed reaction is prostaglandin E2(in) + ATP + H2O = prostaglandin E2(out) + ADP + phosphate + H(+). The enzyme catalyses prostaglandin E1(in) + ATP + H2O = prostaglandin E1(out) + ADP + phosphate + H(+). It catalyses the reaction glycodeoxycholate(in) + glutathione(in) + ATP + H2O = glycodeoxycholate(out) + glutathione(out) + ADP + phosphate + H(+). It carries out the reaction cholate(in) + glutathione(in) + ATP + H2O = cholate(out) + glutathione(out) + ADP + phosphate + H(+). The catalysed reaction is glycocholate(in) + glutathione(in) + ATP + H2O = glycocholate(out) + glutathione(out) + ADP + phosphate + H(+). The enzyme catalyses taurocholate(in) + glutathione(in) + ATP + H2O = taurocholate(out) + glutathione(out) + ADP + phosphate + H(+). It catalyses the reaction glycochenodeoxycholate(in) + glutathione(in) + ATP + H2O = glycochenodeoxycholate(out) + glutathione(out) + ADP + phosphate + H(+). It carries out the reaction taurochenodeoxycholate(in) + glutathione(in) + ATP + H2O = taurochenodeoxycholate(out) + glutathione(out) + ADP + phosphate + H(+). The catalysed reaction is glycoursodeoxycholate(in) + glutathione(in) + ATP + H2O = glycoursodeoxycholate(out) + glutathione(out) + ADP + phosphate + H(+). The enzyme catalyses tauroursodeoxycholate(in) + glutathione(in) + ATP + H2O = tauroursodeoxycholate(out) + glutathione(out) + ADP + phosphate + H(+). Functionally, ATP-dependent transporter of the ATP-binding cassette (ABC) family that actively extrudes physiological compounds and xenobiotics from cells. Transports a range of endogenous molecules that have a key role in cellular communication and signaling, including cyclic nucleotides such as cyclic AMP (cAMP) and cyclic GMP (cGMP), bile acids, steroid conjugates, urate, and prostaglandins. Also mediates the ATP-dependent efflux of glutathione conjugates such as leukotriene C4 (LTC4) and leukotriene B4 (LTB4). The presence of GSH is necessary for the ATP-dependent transport of LTB4, whereas GSH is not required for the transport of LTC4. Mediates the cotransport of bile acids with reduced glutathione (GSH). Transports a wide range of drugs and their metabolites, including anticancer, antiviral and antibiotics molecules. Confers resistance to anticancer agents. The chain is ATP-binding cassette sub-family C member 4 from Mus musculus (Mouse).